The sequence spans 1708 residues: Clathrin heavy chain 2 (1708 aa).

Positions 1-492 are globular terminal domain; the sequence is MAAANAPIAM…VDNDLALKIY (492 aa). WD40-like repeat stretches follow at residues 25-67, 68-113, 114-155, 156-205, 206-270, 271-314, and 315-343; these read FVTF…RPIT, ADSA…MPEQ, VVFW…ANLA, NNQI…QALE, AHAA…PDFQ, DDFP…ISPD, and PIFLTAESSASGGFYAINRRGQVLHATVN. The tract at residues 462–478 is binding site for the uncoating ATPase, involved in lattice disassembly; that stretch reads ENWLAEDKLECSEELGD. The tract at residues 493 to 536 is flexible linker; it reads IKARATPKVVAAFAERREFDKILIYSKQVGYTPDYLFLLQTILR. The interval 537 to 648 is distal segment; the sequence is TDPQGAVNFA…RALQHYTELP (112 aa). Residues 537-1708 are heavy chain arm; sequence TDPQGAVNFA…AYGMPPMGSY (1172 aa). CHCR repeat units follow at residues 551–697, 700–842, 847–986, 993–1138, 1142–1283, 1288–1434, and 1437–1580; these read QMEG…QIVV, AKEY…PEDF, ILSV…QLID, LPES…VSEA, FIRA…FRLA, LNII…DLIN, and LNVL…KECF. Residues 653-1708 are proximal segment; the sequence is VMVNTHAIEP…AYGMPPMGSY (1056 aa). The segment at 1227 to 1536 is involved in binding clathrin light chain; sequence AAKIIYAFIS…YIYKKAGRWK (310 aa). The segment at 1564–1708 is trimerization; the sequence is SEDLLVYFIE…AYGMPPMGSY (145 aa).

The protein belongs to the clathrin heavy chain family. Clathrin triskelions, composed of 3 heavy chains and 3 light chains, are the basic subunits of the clathrin coat.

Its subcellular location is the cytoplasmic vesicle membrane. It is found in the membrane. The protein resides in the coated pit. In terms of biological role, clathrin is the major protein of the polyhedral coat of coated pits and vesicles. The protein is Clathrin heavy chain 2 of Oryza sativa subsp. japonica (Rice).